A 432-amino-acid polypeptide reads, in one-letter code: Gamma-glutamyl phosphate reductase (432 aa).

Belongs to the gamma-glutamyl phosphate reductase family.

Its subcellular location is the cytoplasm. The enzyme catalyses L-glutamate 5-semialdehyde + phosphate + NADP(+) = L-glutamyl 5-phosphate + NADPH + H(+). Its pathway is amino-acid biosynthesis; L-proline biosynthesis; L-glutamate 5-semialdehyde from L-glutamate: step 2/2. Catalyzes the NADPH-dependent reduction of L-glutamate 5-phosphate into L-glutamate 5-semialdehyde and phosphate. The product spontaneously undergoes cyclization to form 1-pyrroline-5-carboxylate. This is Gamma-glutamyl phosphate reductase from Corynebacterium melassecola.